The chain runs to 915 residues: Alpha-xylosidase 1 (915 aa).

The N-terminal stretch at 1 to 27 is a signal peptide; that stretch reads MASSSSSLAFSLSLLLALILCFSPTQS. Residues Asn153, Asn304, and Asn375 are each glycosylated (N-linked (GlcNAc...) asparagine). Active-site residues include Asp440 and Glu443. Asn476 and Asn490 each carry an N-linked (GlcNAc...) asparagine glycan. Asp563 serves as the catalytic Proton donor. N-linked (GlcNAc...) asparagine glycans are attached at residues Asn819, Asn888, and Asn907.

It belongs to the glycosyl hydrolase 31 family. As to expression, expressed in roots, stems, leaves, flowers and siliques. Expressed in cell types undergoing cell wall modifications, including trichomes, vasculature, stomata, and elongating anther filaments. Not detected in pollen.

The protein resides in the secreted. It localises to the cell wall. It is found in the extracellular space. Its subcellular location is the apoplast. It carries out the reaction Hydrolysis of terminal, non-reducing alpha-D-xylose residues with release of alpha-D-xylose.. In terms of biological role, glycoside hydrolase releasing xylosyl residues from xyloglucan oligosaccharides at the non-reducing end. Has alpha-xylosidase activity against xylan oligosaccharides. Also has alpha-glucosidase activity against p-nitrophenyl-alpha-D-glucopyranoside. No activity against p-nitrophenyl-D-xyloside. The chain is Alpha-xylosidase 1 from Arabidopsis thaliana (Mouse-ear cress).